The chain runs to 145 residues: Ribonuclease VapC48 (145 aa).

Mg(2+) is bound by residues Asp-6 and Asp-109. Residues 15-141 (HRASPFHDKA…RKFEGIRIRD (127 aa)) enclose the PINc domain.

This sequence belongs to the PINc/VapC protein family. Mg(2+) is required as a cofactor.

Toxic component of a type II toxin-antitoxin (TA) system. An RNase. Its cognate antitoxin is VapB48. This Mycobacterium tuberculosis (strain CDC 1551 / Oshkosh) protein is Ribonuclease VapC48.